An 809-amino-acid chain; its full sequence is Glycerol-3-phosphate acyltransferase (809 aa).

The HXXXXD motif signature appears at 306–311 (HRSHMD).

Belongs to the GPAT/DAPAT family.

The protein localises to the cell inner membrane. The catalysed reaction is sn-glycerol 3-phosphate + an acyl-CoA = a 1-acyl-sn-glycero-3-phosphate + CoA. The protein operates within phospholipid metabolism; CDP-diacylglycerol biosynthesis; CDP-diacylglycerol from sn-glycerol 3-phosphate: step 1/3. This Vibrio vulnificus (strain CMCP6) protein is Glycerol-3-phosphate acyltransferase.